The chain runs to 351 residues: S-adenosylmethionine:tRNA ribosyltransferase-isomerase (351 aa).

The protein belongs to the QueA family. As to quaternary structure, monomer.

The protein resides in the cytoplasm. The catalysed reaction is 7-aminomethyl-7-carbaguanosine(34) in tRNA + S-adenosyl-L-methionine = epoxyqueuosine(34) in tRNA + adenine + L-methionine + 2 H(+). The protein operates within tRNA modification; tRNA-queuosine biosynthesis. Transfers and isomerizes the ribose moiety from AdoMet to the 7-aminomethyl group of 7-deazaguanine (preQ1-tRNA) to give epoxyqueuosine (oQ-tRNA). The protein is S-adenosylmethionine:tRNA ribosyltransferase-isomerase of Phocaeicola vulgatus (strain ATCC 8482 / DSM 1447 / JCM 5826 / CCUG 4940 / NBRC 14291 / NCTC 11154) (Bacteroides vulgatus).